The following is a 1226-amino-acid chain: Receptor-type tyrosine-protein phosphatase O (1226 aa).

A signal peptide spans 1–29 (MGHLPRGTLGGRRLLPLLGLFVLLKIVTT). Residues 30 to 115 (FHVAVQDDNN…TKPSRSITVL (86 aa)) form the Fibronectin type-III 1 domain. Residues 30 to 832 (FHVAVQDDNN…VTEVNPNVVV (803 aa)) lie on the Extracellular side of the membrane. 3 N-linked (GlcNAc...) asparagine glycosylation sites follow: N75, N154, and N227. The tract at residues 242 to 305 (EPSGSFPEDS…PNSTDYESTS (64 aa)) is disordered. A compositionally biased stretch (basic and acidic residues) spans 260-270 (IGRDRRFHFPE). Residues 277-291 (PSNVSSGSPPSNVSS) are compositionally biased toward low complexity. N279 is a glycosylation site (N-linked (GlcNAc...) asparagine). The span at 296-305 (PNSTDYESTS) shows a compositional bias: polar residues. Fibronectin type-III domains follow at residues 339 to 435 (RTEK…ISPT), 445 to 541 (KPQH…IVPT), 542 to 638 (GIKD…TISF), 641 to 734 (APVA…LEPA), and 735 to 827 (PPKS…TEVN). N-linked (GlcNAc...) asparagine glycans are attached at residues N471 and N500. 3 N-linked (GlcNAc...) asparagine glycosylation sites follow: N710, N743, and N800. The helical transmembrane segment at 833 to 853 (ISVLAILSTLLIGLLLVTLVI) threads the bilayer. Residues 854–1226 (LRKKHLQMAR…DVIYENVSKS (373 aa)) are Cytoplasmic-facing. S875 carries the phosphoserine modification. One can recognise a Tyrosine-protein phosphatase domain in the interval 948 to 1205 (FSLQFEELKL…IFIHQCVQLM (258 aa)). Residues D1112, 1146–1152 (CSAGVGR), and Q1190 contribute to the substrate site. Catalysis depends on C1146, which acts as the Phosphocysteine intermediate. Phosphotyrosine is present on Y1220.

It belongs to the protein-tyrosine phosphatase family. Receptor class 3 subfamily. Interacts (phosphorylated form) with FYN and GRB2.

The protein localises to the membrane. It carries out the reaction O-phospho-L-tyrosyl-[protein] + H2O = L-tyrosyl-[protein] + phosphate. Functionally, possesses tyrosine phosphatase activity. Plays a role in regulating the glomerular pressure/filtration rate relationship through an effect on podocyte structure and function. This chain is Receptor-type tyrosine-protein phosphatase O (Ptpro), found in Mus musculus (Mouse).